A 62-amino-acid chain; its full sequence is Omega-conotoxin-like Bu11 (62 aa).

An N-terminal signal peptide occupies residues 1-7 (ACQLITA). Residues 8–27 (EDSRGTQLHRALRSTSKVSK) constitute a propeptide that is removed on maturation. 3 disulfides stabilise this stretch: Cys-31–Cys-46, Cys-38–Cys-49, and Cys-45–Cys-56.

The protein belongs to the conotoxin O1 superfamily. In terms of tissue distribution, expressed by the venom duct.

Its subcellular location is the secreted. Omega-conotoxins act at presynaptic membranes, they bind and block voltage-gated calcium channels (Cav). The polypeptide is Omega-conotoxin-like Bu11 (Conus bullatus (Bubble cone)).